The chain runs to 473 residues: Homeobox protein ATH1 (473 aa).

The interval 205 to 221 is SR/KY domain; the sequence is SKYLHSVQEILSHFAAY. The BELL domain stretch occupies residues 266–336; it reads QRRALEAKKT…NLRERICKKI (71 aa). Residues 372–434 constitute a DNA-binding region (homeobox); the sequence is IWRPQRGLPE…NARVRLWKPM (63 aa). A disordered region spans residues 448-473; the sequence is NNSHIQPNGPTLRMPKSVMMSQAMHK.

This sequence belongs to the TALE/BELL homeobox family. May form heterodimeric complex with the TALE/KNOX protein STM. In terms of tissue distribution, most abundant in flowers.

Its subcellular location is the nucleus. Its function is as follows. Transcription factor which may be involved in the signal transduction pathway downstream of the COP1 gene. Controls floral competency as a specific activator of FLC expression. Is responsive of the nuclear import of SHOOT MERISTEMLESS (STM). The polypeptide is Homeobox protein ATH1 (ATH1) (Arabidopsis thaliana (Mouse-ear cress)).